A 414-amino-acid chain; its full sequence is Lysocardiolipin acyltransferase 1 (414 aa).

A run of 2 helical transmembrane segments spans residues 47 to 67 (FILT…SPFL) and 86 to 106 (ATWL…KVII). The HXXXXD motif signature appears at 123-128 (HRTRMD). N6-acetyllysine is present on lysine 221. Helical transmembrane passes span 340–360 (LRVL…SPAM) and 362–382 (LLIY…VIFV).

It belongs to the 1-acyl-sn-glycerol-3-phosphate acyltransferase family. In terms of tissue distribution, expressed at higher level in heart, kidney and pancreas than in brain, spleen, liver, lung, small intestine and placenta.

The protein resides in the endoplasmic reticulum membrane. The catalysed reaction is a 1-acyl-sn-glycero-3-phosphate + an acyl-CoA = a 1,2-diacyl-sn-glycero-3-phosphate + CoA. It carries out the reaction a 1-acyl-sn-glycero-3-phospho-(1D-myo-inositol) + an acyl-CoA = a 1,2-diacyl-sn-glycero-3-phospho-(1D-myo-inositol) + CoA. The enzyme catalyses 1-acyl-sn-glycero-3-phospho-(1'-sn-glycerol) + an acyl-CoA = a 1,2-diacyl-sn-glycero-3-phospho-(1'-sn-glycerol) + CoA. It catalyses the reaction 1-hexadecanoyl-sn-glycero-3-phosphate + (9Z)-octadecenoyl-CoA = 1-hexadecanoyl-2-(9Z-octadecenoyl)-sn-glycero-3-phosphate + CoA. The catalysed reaction is 1-(9Z-octadecenoyl)-sn-glycero-3-phosphate + (9Z)-octadecenoyl-CoA = 1,2-di-(9Z-octadecenoyl)-sn-glycero-3-phosphate + CoA. It carries out the reaction 1-(9Z,12Z)-octadecadienoyl-sn-glycero-3-phosphate + (9Z)-octadecenoyl-CoA = 1-(9Z,12Z)-octadecadienoyl-2-(9Z)-octadecenoyl-sn-glycero-3-phosphate + CoA. The enzyme catalyses 1-(9Z,12Z,15Z)-octadecatrienoyl-sn-glycero-3-phosphate + (9Z)-octadecenoyl-CoA = 1-(9Z,12Z,15Z)-octadecatrienoyl-2-(9Z)-octadecenoyl-sn-glycero-3-phosphate + CoA. It catalyses the reaction 1-(9Z-octadecenoyl)-sn-glycero-3-phosphate + hexadecanoyl-CoA = 1-(9Z)-octadecenoyl-2-hexadecanoyl-sn-glycero-3-phosphate + CoA. The catalysed reaction is 1-(9Z-octadecenoyl)-sn-glycero-3-phosphate + octadecanoyl-CoA = 1-(9Z-octadecenoyl)-2-octadecanoyl-sn-glycero-3-phosphate + CoA. It carries out the reaction 1-acyl-sn-glycero-3-phospho-(1'-sn-glycerol) + (9Z)-octadecenoyl-CoA = 1-acyl-2-(9Z-octadecenoyl)-sn-glycero-3-phospho-(1'-sn-glycerol) + CoA. The enzyme catalyses a 1-acyl-sn-glycero-3-phospho-(1D-myo-inositol) + (9Z)-octadecenoyl-CoA = a 1-acyl-2-(9Z-octadecenoyl)-sn-glycero-3-phospho-(1D-myo-inositol) + CoA. It catalyses the reaction 1-hexadecanoyl-sn-glycero-3-phospho-(1D-myo-inositol) + hexadecanoyl-CoA = 1,2-dihexadecanoyl-sn-glycero-3-phospho-(1D-myo-inositol) + CoA. The catalysed reaction is 1-hexadecanoyl-sn-glycero-3-phospho-(1D-myo-inositol) + octadecanoyl-CoA = 1-hexadecanoyl-2-octadecanoyl-sn-glycero-3-phospho-(1D-myo-inositol) + CoA. It carries out the reaction 1-hexadecanoyl-sn-glycero-3-phospho-(1D-myo-inositol) + (9Z)-octadecenoyl-CoA = 1-hexadecanoyl-2-(9Z-octadecenoyl)-sn-glycero-3-phospho-(1D-myo-inositol) + CoA. The enzyme catalyses 1-hexadecanoyl-sn-glycero-3-phospho-(1D-myo-inositol) + (9Z,12Z)-octadecadienoyl-CoA = 1-hexadecanoyl-2-(9Z,12Z-octadecadienoyl)-sn-glycero-3-phospho-(1D-myo-inositol) + CoA. It catalyses the reaction 1-hexadecanoyl-sn-glycero-3-phospho-(1D-myo-inositol) + (5Z,8Z,11Z,14Z)-eicosatetraenoyl-CoA = 1-hexadecanoyl-2-(5Z,8Z,11Z,14Z-eicosatetraenoyl)-sn-glycero-3-phospho-D-myo-inositol + CoA. The catalysed reaction is 1-hexadecanoyl-sn-glycero-3-phospho-(1'-sn-glycerol) + hexadecanoyl-CoA = 1,2-dihexadecanoyl-sn-glycero-3-phospho-(1'-sn-glycerol) + CoA. It carries out the reaction 1-hexadecanoyl-sn-glycero-3-phospho-(1'-sn-glycerol) + octadecanoyl-CoA = 1-hexadecanoyl-2-octadecanoyl-sn-glycero-3-phospho-(1'-sn-glycerol) + CoA. The enzyme catalyses 1-hexadecanoyl-sn-glycero-3-phospho-(1'-sn-glycerol) + (9Z)-octadecenoyl-CoA = 1-hexadecanoyl-2-(9Z-octadecenoyl)-sn-glycero-3-phospho-(1'-sn-glycerol) + CoA. It catalyses the reaction 1-hexadecanoyl-sn-glycero-3-phospho-(1'-sn-glycerol) + (9Z,12Z)-octadecadienoyl-CoA = 1-hexadecanoyl-2-(9Z,12Z-octadecadienoyl)-sn-glycero-3-phospho-(1'-sn-glycerol) + CoA. The catalysed reaction is 1-tetradecanoyl-sn-glycero-3-phospho-(1'-sn-glycerol) + (9Z)-octadecenoyl-CoA = 1-tetradecanoyl-2-(9Z-octadecenoyl)-sn-glycero-3-phospho-(1'-sn-glycerol) + CoA. It carries out the reaction 1-octadecanoyl-sn-glycero-3-phospho-(1'-sn-glycerol) + (9Z)-octadecenoyl-CoA = 1-octadecanoyl-2-(9Z-octadecenoyl)-sn-glycero-3-phospho-(1'-sn-glycerol) + CoA. The enzyme catalyses 1-(9Z-octadecenoyl)-sn-glycero-3-phospho-(1'-sn-glycerol) + (9Z)-octadecenoyl-CoA = 1,2-di-(9Z-octadecenoyl)-sn-glycero-3-phospho-(1'-sn-glycerol) + CoA. It catalyses the reaction 1-hexadecanoyl-sn-glycero-3-phospho-(1D-myo-inositol) + dodecanoyl-CoA = 1-hexadecanoyl-2-dodecanoyl-sn-glycero-3-phospho-(1D-myo-inositol) + CoA. The catalysed reaction is 1',3'-bis-[1-acyl-sn-glycero-3-phospho]-glycerol + (9Z)-octadecenoyl-CoA = 1'-[1-acyl-2-(9Z)-octadecenoyl-sn-glycero-3-phospho],3'-[1-acyl,2-hydroxy-sn-glycero-3-phospho]-glycerol + CoA. It carries out the reaction 1'-[1,2-diacyl-sn-glycero-3-phospho],3'-[1-acyl-sn-glycero-3-phospho]-glycerol + (9Z)-octadecenoyl-CoA = 1'-[1,2-diacyl-sn-glycero-3-phospho],3'-[1-acyl,2-(9Z)-octadecenoyl-sn-glycero-3-phospho]-glycerol + CoA. The enzyme catalyses 1'-[1,2-diacyl-sn-glycero-3-phospho],3'-[1-acyl-sn-glycero-3-phospho]-glycerol + (9Z,12Z)-octadecadienoyl-CoA = 1'-[1,2-diacyl-sn-glycero-3-phospho],3'-[1-acyl,2-(9Z,12Z)-octadecadienoyl-sn-glycero-3-phospho]-glycerol + CoA. It catalyses the reaction 1'-[1,2-diacyl-sn-glycero-3-phospho],3'-[1-acyl-sn-glycero-3-phospho]-glycerol + dodecanoyl-CoA = 1'-[1,2-diacyl-sn-glycero-3-phospho],3'-[1-acyl,2-dodecanoyl-sn-glycero-3-phospho]-glycerol + CoA. The catalysed reaction is 1',3'-bis-[1-acyl-sn-glycero-3-phospho]-glycerol + dodecanoyl-CoA = 1'-[1-acyl-2-dodecanoyl-sn-glycero-3-phospho],3'-[1-acyl,2-hydroxy-sn-glycero-3-phospho]-glycerol + CoA. It carries out the reaction a 1-acyl-sn-glycero-3-phosphate + (9Z)-octadecenoyl-CoA = a 1-acyl-2-(9Z-octadecenoyl)-sn-glycero-3-phosphate + CoA. The enzyme catalyses 1',3'-bis-[1-acyl-sn-glycero-3-phospho]-glycerol + (9Z,12Z)-octadecadienoyl-CoA = 1'-[1-acyl-2-(9Z,12Z)-octadecadienoyl-sn-glycero-3-phospho],3'-[1-acyl,2-hydroxy-sn-glycero-3-phospho]-glycerol + CoA. It catalyses the reaction 1',3'-bis-[1-acyl-sn-glycero-3-phospho]-glycerol + hexadecanoyl-CoA = 1'-[1-acyl-2-hexadecanoyl-sn-glycero-3-phospho],3'-[1-acyl,2-hydroxy-sn-glycero-3-phospho]-glycerol + CoA. The catalysed reaction is 1',3'-bis-[1-acyl-sn-glycero-3-phospho]-glycerol + octadecanoyl-CoA = 1'-[1-acyl-2-octadecanoyl-sn-glycero-3-phospho],3'-[1-acyl,2-hydroxy-sn-glycero-3-phospho]-glycerol + CoA. It carries out the reaction 1'-[1,2-diacyl-sn-glycero-3-phospho],3'-[1-acyl-sn-glycero-3-phospho]-glycerol + octanoyl-CoA = 1'-[1,2-diacyl-sn-glycero-3-phospho],3'-[1-acyl,2-octanoyl-sn-glycero-3-phospho]-glycerol + CoA. The enzyme catalyses 1',3'-bis-[1-acyl-sn-glycero-3-phospho]-glycerol + octanoyl-CoA = 1'-[1-acyl-2-octanoyl-sn-glycero-3-phospho],3'-[1-acyl,2-hydroxy-sn-glycero-3-phospho]-glycerol + CoA. It catalyses the reaction 1'-[1,2-diacyl-sn-glycero-3-phospho],3'-[1-acyl-sn-glycero-3-phospho]-glycerol + hexadecanoyl-CoA = 1'-[1,2-diacyl-sn-glycero-3-phospho],3'-[1-acyl,2-hexadecanoyl-sn-glycero-3-phospho]-glycerol + CoA. The catalysed reaction is 1'-[1,2-diacyl-sn-glycero-3-phospho],3'-[1-acyl-sn-glycero-3-phospho]-glycerol + (5Z,8Z,11Z,14Z)-eicosatetraenoyl-CoA = 1'-[1,2-diacyl-sn-glycero-3-phospho],3'-[1-acyl,2-(5Z,8Z,11Z,14Z)-eicosatetraenoyl-sn-glycero-3-phospho]-glycerol + CoA. It carries out the reaction 1',3'-bis-[1-acyl-sn-glycero-3-phospho]-glycerol + (5Z,8Z,11Z,14Z)-eicosatetraenoyl-CoA = 1'-[1-acyl-2-(5Z,8Z,11Z,14Z)-eicosatetraenoyl-sn-glycero-3-phospho],3'-[1-acyl,2-hydroxy-sn-glycero-3-phospho]-glycerol + CoA. The enzyme catalyses a 1-acyl-sn-glycero-3-phospho-(1D-myo-inositol) + octadecanoyl-CoA = a 1-acyl-2-octadecanoyl-sn-glycero-3-phospho-(1D-myo-inositol) + CoA. It catalyses the reaction a 2-acyl-sn-glycero-3-phospho-D-myo-inositol + octadecanoyl-CoA = 1-octadecanoyl-2-acyl-sn-glycero-3-phospho-1D-myo-inositol + CoA. The protein operates within phospholipid metabolism; CDP-diacylglycerol biosynthesis; CDP-diacylglycerol from sn-glycerol 3-phosphate: step 2/3. In terms of biological role, exhibits acyl-CoA:lysocardiolipin acyltransferase (ALCAT) activity; catalyzes the reacylation of lyso-cardiolipin to cardiolipin (CL), a key step in CL remodeling. Recognizes both monolysocardiolipin and dilysocardiolipin as substrates with a preference for linoleoyl-CoA and oleoyl-CoA as acyl donors. Also exhibits 1-acyl-sn-glycerol-3-phosphate acyltransferase activity (AGPAT) activity; converts 1-acyl-sn-glycerol-3- phosphate (lysophosphatidic acid or LPA) into 1,2-diacyl-sn-glycerol-3- phosphate (phosphatidic acid or PA) by incorporating an acyl moiety at the sn-2 position of the glycerol backbone. Possesses both lysophosphatidylinositol acyltransferase (LPIAT) and lysophosphatidylglycerol acyltransferase (LPGAT) activities. Required for establishment of the hematopoietic and endothelial lineages. The chain is Lysocardiolipin acyltransferase 1 (LCLAT1) from Homo sapiens (Human).